We begin with the raw amino-acid sequence, 172 residues long: Major exported protein (172 aa).

The protein belongs to the hcp1 family.

It localises to the secreted. The sequence is that of Major exported protein (hcpA) from Pseudomonas aeruginosa (strain ATCC 15692 / DSM 22644 / CIP 104116 / JCM 14847 / LMG 12228 / 1C / PRS 101 / PAO1).